The chain runs to 471 residues: Replication factor C large subunit (471 aa).

44 to 51 (GSPGIGKT) is a binding site for ATP. Basic and acidic residues predominate over residues 422–431 (RTDAAVDHSE). The tract at residues 422–471 (RTDAAVDHSEGAFAGAVREDNTDEDSAADETTDGDEDTGADSQRGLDEFF) is disordered. Over residues 442–460 (NTDEDSAADETTDGDEDTG) the composition is skewed to acidic residues.

This sequence belongs to the activator 1 small subunits family. RfcL subfamily. In terms of assembly, heteromultimer composed of small subunits (RfcS) and large subunits (RfcL).

Functionally, part of the RFC clamp loader complex which loads the PCNA sliding clamp onto DNA. The polypeptide is Replication factor C large subunit (Halobacterium salinarum (strain ATCC 29341 / DSM 671 / R1)).